We begin with the raw amino-acid sequence, 714 residues long: Nuclear protein MDM1 (714 aa).

An ST]-E-Y-X(3)-F motif 1; required for efficient microtubule binding and stabilization motif is present at residues 9 to 15 (SEYQRNF). Residues 79 to 152 (NVVASPEPEA…HTPVNENVEL (74 aa)) are disordered. S83 bears the Phosphoserine mark. Residues 93–111 (KSQEAEQKDVTQERVHSLE) are compositionally biased toward basic and acidic residues. 2 positions are modified to phosphoserine: S123 and S126. Positions 138-147 (EGVTNHTPVN) are enriched in polar residues. An ST]-E-Y-X(3)-F motif 2; required for efficient microtubule binding and stabilization motif is present at residues 189–195 (SEYQRQF). The ST]-E-Y-X(3)-F motif 3; required for efficient microtubule binding and stabilization motif lies at 232–238 (TEYKRNF). Phosphoserine is present on residues S242 and S263. The ST]-E-Y-X(3)-F motif 4; required for efficient microtubule binding and stabilization signature appears at 306–312 (SEYRAKF). S314 carries the post-translational modification Phosphoserine. The disordered stretch occupies residues 391–571 (DLAGDPTSHK…DCLETSKNDF (181 aa)). Residues 460 to 469 (KEEEDDNEEE) are compositionally biased toward acidic residues. A compositionally biased stretch (basic and acidic residues) spans 482–501 (EQEKLDVREKSKADKMKEGS). Phosphoserine occurs at positions 560 and 584. A disordered region spans residues 616–637 (SKIPKYPTNPPGQLPSPPHVPS). Residues 622-635 (PTNPPGQLPSPPHV) are compositionally biased toward pro residues. S648 is subject to Phosphoserine.

It belongs to the MDM1 family.

It is found in the nucleus. Its subcellular location is the cytoplasm. The protein resides in the cytoskeleton. The protein localises to the microtubule organizing center. It localises to the centrosome. It is found in the centriole. Its function is as follows. Microtubule-binding protein that negatively regulates centriole duplication. Binds to and stabilizes microtubules. The protein is Nuclear protein MDM1 (MDM1) of Homo sapiens (Human).